A 141-amino-acid polypeptide reads, in one-letter code: Large ribosomal subunit protein uL11 (141 aa).

It belongs to the universal ribosomal protein uL11 family. Part of the ribosomal stalk of the 50S ribosomal subunit. Interacts with L10 and the large rRNA to form the base of the stalk. L10 forms an elongated spine to which L12 dimers bind in a sequential fashion forming a multimeric L10(L12)X complex. In terms of processing, one or more lysine residues are methylated.

In terms of biological role, forms part of the ribosomal stalk which helps the ribosome interact with GTP-bound translation factors. This is Large ribosomal subunit protein uL11 from Prochlorococcus marinus (strain MIT 9211).